We begin with the raw amino-acid sequence, 173 residues long: Mesencephalic astrocyte-derived neurotrophic factor homolog (173 aa).

A signal peptide spans 1-22 (MKTWHMVVVIGFLATLAQTSLA). Disulfide bonds link C28–C114, C31–C103, C61–C72, and C148–C151.

Belongs to the ARMET family.

It is found in the secreted. Required during the maturation of the embryonic nervous system for maintenance of neuronal and cuticular connectivity. Essential for maintenance of dopaminergic neurons and dopamine levels. This chain is Mesencephalic astrocyte-derived neurotrophic factor homolog, found in Drosophila simulans (Fruit fly).